Reading from the N-terminus, the 437-residue chain is Amino-acid acetyltransferase (437 aa).

Residues 289–437 (ECIRLATSFD…SKVLMLALDN (149 aa)) form the N-acetyltransferase domain.

This sequence belongs to the acetyltransferase family. ArgA subfamily.

Its subcellular location is the cytoplasm. It catalyses the reaction L-glutamate + acetyl-CoA = N-acetyl-L-glutamate + CoA + H(+). The protein operates within amino-acid biosynthesis; L-arginine biosynthesis; N(2)-acetyl-L-ornithine from L-glutamate: step 1/4. The sequence is that of Amino-acid acetyltransferase from Haemophilus ducreyi (strain 35000HP / ATCC 700724).